Reading from the N-terminus, the 343-residue chain is Mitotic checkpoint protein bub-3 (343 aa).

7 WD repeats span residues 21 to 62, 67 to 105, 107 to 146, 150 to 187, 192 to 232, 249 to 288, and 291 to 331; these read PPFV…DISE, THGK…GTQL, SHAL…NGAI, NVSS…EPLQ, PLKY…EMMK, ELIH…RIIQ, and KFET…NSIT. The tract at residues 322-343 is disordered; it reads PSPLPNNSITIRHITDPESRPK. Residues 334-343 are compositionally biased toward basic and acidic residues; sequence HITDPESRPK.

This sequence belongs to the WD repeat BUB3 family. As to quaternary structure, may interact with bub-1; for localization at the kinetochore and the onset of anaphase.

The protein localises to the chromosome. It localises to the centromere. Its subcellular location is the kinetochore. The protein resides in the nucleus. Its function is as follows. Has a dual function in spindle-assembly checkpoint signaling and in promoting the establishment of correct kinetochore-microtubule (K-MT) attachments. Promotes the formation of stable end-on bipolar attachments of chromosomes. Necessary for expression and kinetochore localization of bub-1. Plays a role in synapsis checkpoint signaling inducing apoptosis in response to unsynapsed chromosomes and thus controlling chromosomal segregation during oocyte meiosis. The protein is Mitotic checkpoint protein bub-3 of Caenorhabditis elegans.